The sequence spans 744 residues: Glucosamine inositolphosphorylceramide transferase 1 (744 aa).

The next 3 helical transmembrane spans lie at 31–51 (FLVA…WLVV), 378–398 (SLFG…VGFV), and 460–480 (LFFC…VHFL). Residues Asn534, 558–563 (NSLNNR), 579–581 (DDD), Arg609, and 665–669 (FNCED) contribute to the substrate site. Asp581 is a binding site for Mn(2+). A disulfide bridge connects residues Cys667 and Cys718. Asp669 is an active-site residue.

This sequence belongs to the glycosyltransferase 64 family. It depends on Mn(2+) as a cofactor.

Its subcellular location is the membrane. The protein operates within sphingolipid metabolism. Its function is as follows. Essential protein. Glycosyltransferase that mediates the glycosylation of glycosylinositol phosphorylceramides (GIPCs), the major sphingolipids in the plasma membrane; acts as a HexN(Ac)-specific GIPC sugar transferase. Responsible for the glycosylation of a subgroup of GIPCs found in seeds and pollen that contain GlcNAc and GlcN (GlcN(Ac)). Maybe involved in the maintenance of cell-cell adhesion. In Oryza sativa subsp. indica (Rice), this protein is Glucosamine inositolphosphorylceramide transferase 1.